The chain runs to 194 residues: 7-methyl-GTP pyrophosphatase (194 aa).

D69 serves as the catalytic Proton acceptor.

It belongs to the Maf family. YceF subfamily. A divalent metal cation serves as cofactor.

It is found in the cytoplasm. The enzyme catalyses N(7)-methyl-GTP + H2O = N(7)-methyl-GMP + diphosphate + H(+). In terms of biological role, nucleoside triphosphate pyrophosphatase that hydrolyzes 7-methyl-GTP (m(7)GTP). May have a dual role in cell division arrest and in preventing the incorporation of modified nucleotides into cellular nucleic acids. The polypeptide is 7-methyl-GTP pyrophosphatase (yceF1) (Salmonella choleraesuis (strain SC-B67)).